Reading from the N-terminus, the 793-residue chain is Spindle and centriole-associated protein 1 (793 aa).

Positions 1–29 (MSYLRASRTSSNLSLAKKPSKTRKKLQAR) are disordered. A compositionally biased stretch (basic residues) spans 18 to 27 (KPSKTRKKLQ). Positions 312–405 (SLGLLNSMIM…LTAEILSLKE (94 aa)) form a coiled coil. Residues 519–542 (KTVGNLSSHSAVPKRAANRLPSPP) are disordered. Positions 622 to 712 (LQNEDLVSQM…LLKLIEQQKQ (91 aa)) form a coiled coil. Residues 718–739 (PTLSPITPQGRRTGSSLDTTPL) are compositionally biased toward polar residues. Positions 718–783 (PTLSPITPQG…RSQAANDRGE (66 aa)) are disordered. The segment covering 740–753 (SSCSTSGRRSSGAS) has biased composition (low complexity). A compositionally biased stretch (polar residues) spans 754–778 (NKSESISTSVGSLRSASTGRRSQAA).

The protein localises to the cytoplasm. It is found in the cytoskeleton. It localises to the microtubule organizing center. The protein resides in the centrosome. Its subcellular location is the centriole. The protein localises to the spindle. Regulator required for centriole duplication. The protein is Spindle and centriole-associated protein 1 (spice1) of Xenopus laevis (African clawed frog).